The primary structure comprises 138 residues: Nucleoside diphosphate kinase (138 aa).

ATP contacts are provided by lysine 9, phenylalanine 57, arginine 85, threonine 91, arginine 102, and asparagine 112. The active-site Pros-phosphohistidine intermediate is histidine 115.

Belongs to the NDK family. As to quaternary structure, homotetramer. Mg(2+) serves as cofactor.

It localises to the cytoplasm. The catalysed reaction is a 2'-deoxyribonucleoside 5'-diphosphate + ATP = a 2'-deoxyribonucleoside 5'-triphosphate + ADP. It catalyses the reaction a ribonucleoside 5'-diphosphate + ATP = a ribonucleoside 5'-triphosphate + ADP. Its function is as follows. Major role in the synthesis of nucleoside triphosphates other than ATP. The ATP gamma phosphate is transferred to the NDP beta phosphate via a ping-pong mechanism, using a phosphorylated active-site intermediate. The chain is Nucleoside diphosphate kinase from Deinococcus geothermalis (strain DSM 11300 / CIP 105573 / AG-3a).